We begin with the raw amino-acid sequence, 301 residues long: uncharacterized protein (301 aa).

The Charge relay system role is filled by threonine 47. Residue tyrosine 136 is the Proton donor of the active site. Lysine 165 acts as the Schiff-base intermediate with substrate in catalysis.

The protein belongs to the DapA family. In terms of assembly, homotetramer.

It is found in the cytoplasm. This is an uncharacterized protein from Thermofilum pendens (strain DSM 2475 / Hrk 5).